We begin with the raw amino-acid sequence, 475 residues long: PRAME family member 20 (475 aa).

The stretch at 97-124 (RWKLQVLDLQDVSENFWMVWSEAMARRC) is one LRR 1; degenerate repeat. Residues 179 to 203 (HLCCKKLKMLGMLFHNIRNILKTVN) form an LRR 2; degenerate repeat. The stretch at 204–230 (LDCIQEVEVNCNWTLPVLAEFTPYLGQ) is one LRR 3; degenerate repeat. The stretch at 231 to 265 (MRNLRKLVLSDIDSRYISPEQKKEFVTQFTTQFLK) is one LRR 4; degenerate repeat. LRR repeat units lie at residues 266 to 291 (LRCLQKLYMNSVSFLEGHLDQMLSCL), 292 to 323 (KTSLNILAITNCVLLESDLKHLSKYPSIGQLK), 324 to 342 (TLDLSGTRLANFSLVPLQV), 348 to 375 (AATLEYLDLDDCGIVDSQVNAILPALSR), and 376 to 400 (CFELTTFSFRGNPISTATLENLLCH).

Belongs to the PRAME family.

The sequence is that of PRAME family member 20 from Homo sapiens (Human).